The chain runs to 188 residues: Elongation factor P-like protein (188 aa).

The protein belongs to the elongation factor P family.

This is Elongation factor P-like protein from Alcanivorax borkumensis (strain ATCC 700651 / DSM 11573 / NCIMB 13689 / SK2).